We begin with the raw amino-acid sequence, 129 residues long: ATP synthase epsilon chain (129 aa).

The protein belongs to the ATPase epsilon chain family. In terms of assembly, F-type ATPases have 2 components, CF(1) - the catalytic core - and CF(0) - the membrane proton channel. CF(1) has five subunits: alpha(3), beta(3), gamma(1), delta(1), epsilon(1). CF(0) has three main subunits: a, b and c.

The protein resides in the cell inner membrane. Functionally, produces ATP from ADP in the presence of a proton gradient across the membrane. This Campylobacter curvus (strain 525.92) protein is ATP synthase epsilon chain.